A 281-amino-acid chain; its full sequence is Ribosomal RNA small subunit methyltransferase A (281 aa).

S-adenosyl-L-methionine-binding residues include Asn25, Leu27, Gly52, Glu73, Asp99, and Asn118.

Belongs to the class I-like SAM-binding methyltransferase superfamily. rRNA adenine N(6)-methyltransferase family. RsmA subfamily.

It is found in the cytoplasm. It catalyses the reaction adenosine(1518)/adenosine(1519) in 16S rRNA + 4 S-adenosyl-L-methionine = N(6)-dimethyladenosine(1518)/N(6)-dimethyladenosine(1519) in 16S rRNA + 4 S-adenosyl-L-homocysteine + 4 H(+). Specifically dimethylates two adjacent adenosines (A1518 and A1519) in the loop of a conserved hairpin near the 3'-end of 16S rRNA in the 30S particle. May play a critical role in biogenesis of 30S subunits. This Erythrobacter litoralis (strain HTCC2594) protein is Ribosomal RNA small subunit methyltransferase A.